The sequence spans 695 residues: Follicle-stimulating hormone receptor (695 aa).

The signal sequence occupies residues 1–17 (MALFLVALLAFLSLGSG). 2 cysteine pairs are disulfide-bonded: C18/C25 and C23/C32. Residues 18-46 (CHHRLCHCSNGVFLCQDSKVTEMPSDLPR) enclose the LRRNT domain. Topologically, residues 18-366 (CHHRLCHCSN…EDIMGYDILR (349 aa)) are extracellular. 9 LRR repeats span residues 48 to 70 (AVEL…SGFG), 71 to 93 (DLEK…VFSN), 96 to 118 (KLHE…AFQN), 121 to 142 (NLRY…HKIQ), 143 to 167 (SLQK…SFMG), 171 to 192 (ESMI…AFNG), 194 to 216 (QLDE…VFQG), 219 to 239 (GPVI…YGLE), and 240 to 262 (NLKK…EKFV). Residues N191 and N199 are each glycosylated (N-linked (GlcNAc...) asparagine). Cystine bridges form between C275–C346, C276–C292, C276–C356, and C292–C338. An N-linked (GlcNAc...) asparagine glycan is attached at N293. At Y335 the chain carries Sulfotyrosine. Residues 367 to 387 (VLIWFISILAITGNILVLVIL) form a helical membrane-spanning segment. Over 388–398 (ITSQYKLTVPR) the chain is Cytoplasmic. Residues 399 to 421 (FLMCNLAFADLCIGIYLLLIASV) form a helical membrane-spanning segment. The Extracellular portion of the chain corresponds to 422–443 (DVHTKSQYHNYAIDWQTGAGCD). The cysteines at positions 442 and 517 are disulfide-linked. The helical transmembrane segment at 444 to 465 (AAGFFTVFASELSVYTLTAITL) threads the bilayer. Over 466–485 (ERWHTITHAMQLECKVHVRH) the chain is Cytoplasmic. A helical membrane pass occupies residues 486–508 (AASIMLVGWVFAFAVALFPIFGI). Over 509-528 (SSYMKVSICLPMDIDSPLSQ) the chain is Extracellular. A helical transmembrane segment spans residues 529 to 550 (LYVMSLLVLNVLAFVVICGCYT). Residues 551-573 (HIYLTVRNPNITSSSSDTKIAKR) lie on the Cytoplasmic side of the membrane. The helical transmembrane segment at 574 to 597 (MAMLIFTDFLCMAPISFFAISASL) threads the bilayer. The Extracellular portion of the chain corresponds to 598 to 608 (KVPLITVSKSK). Residues 609-630 (ILLVLFYPINSCANPFLYAIFT) form a helical membrane-spanning segment. Topologically, residues 631-695 (RNFRRDFFIL…LIPLRHLAKN (65 aa)) are cytoplasmic.

It belongs to the G-protein coupled receptor 1 family. FSH/LSH/TSH subfamily. As to quaternary structure, homotrimer. Functions as a homotrimer binding the FSH hormone heterodimer composed of CGA and FSHB. Interacts with ARRB2. Interacts with APPL2; interaction is independent of follicle stimulating hormone stimulation. Post-translationally, N-glycosylated; indirectly required for FSH-binding, possibly via a conformational change that allows high affinity binding of hormone. In terms of processing, sulfated. As to expression, isoform FSH-R3 is expressed in ovary and testis, but not in kidney (at protein level).

It localises to the cell membrane. Its function is as follows. G protein-coupled receptor for follitropin, the follicle-stimulating hormone. The activity of isoform FSH-R1 is mediated by G proteins which activate adenylate cyclase. Isoform FSH-R2 and isoform FSH-R3 also bind FSH, but this does not result in activation of adenylate cyclase. Isoform FSH-R3 may be involved in calcium signaling. Through cAMP production activates the downstream PI3K-AKT and ERK1/ERK2 signaling pathways. The polypeptide is Follicle-stimulating hormone receptor (FSHR) (Ovis aries (Sheep)).